The sequence spans 681 residues: Terpene synthase 6, chloroplastic (681 aa).

Mg(2+) contacts are provided by aspartate 433, aspartate 437, asparagine 577, and glutamate 585. The DDXXD motif motif lies at 433–437 (DDLFD).

The protein belongs to the terpene synthase family. Requires Mg(2+) as cofactor. In terms of tissue distribution, expressed in leaves.

The protein localises to the plastid. Its subcellular location is the chloroplast. The protein operates within secondary metabolite biosynthesis; terpenoid biosynthesis. Functionally, may be involved in the biosynthesis of ent-kaurene diterpenoids natural products such as oridonin, miltiradiene, eriocalyxin B and nezukol, known to exhibit antitumor, anti-inflammatory and antibacterial activities. In Isodon rubescens (Rabdosia rubescens), this protein is Terpene synthase 6, chloroplastic.